The primary structure comprises 419 residues: uncharacterized protein (419 aa).

This is an uncharacterized protein from Schizosaccharomyces pombe (strain 972 / ATCC 24843) (Fission yeast).